A 455-amino-acid polypeptide reads, in one-letter code: Probable glycine dehydrogenase (decarboxylating) subunit 1 (455 aa).

It belongs to the GcvP family. N-terminal subunit subfamily. The glycine cleavage system is composed of four proteins: P, T, L and H. In this organism, the P 'protein' is a heterodimer of two subunits.

It carries out the reaction N(6)-[(R)-lipoyl]-L-lysyl-[glycine-cleavage complex H protein] + glycine + H(+) = N(6)-[(R)-S(8)-aminomethyldihydrolipoyl]-L-lysyl-[glycine-cleavage complex H protein] + CO2. The glycine cleavage system catalyzes the degradation of glycine. The P protein binds the alpha-amino group of glycine through its pyridoxal phosphate cofactor; CO(2) is released and the remaining methylamine moiety is then transferred to the lipoamide cofactor of the H protein. In Francisella philomiragia subsp. philomiragia (strain ATCC 25017 / CCUG 19701 / FSC 153 / O#319-036), this protein is Probable glycine dehydrogenase (decarboxylating) subunit 1.